A 1010-amino-acid polypeptide reads, in one-letter code: MSYDYHQNWGRDGGPRSSGGGYGGSYGGSHGGGHGGNRGSGGGGGGGGGRGGRGRHPGHLKGREIGLWYAKKQGQKNKEAERQERAVVHMDERREEQIVQLLHSVQTKNDKDEEAQISWFAPEDHGYGTEAPAENKPNSVKNVEHQEKKMINQEKRPFRIRDKYIDRDSEYLLQENEPDATLDQQLLEDLQKKKTDLRYIEMQRFREKLPSYGMQKELVNMIDNHQVTVISGETGCGKTTQVTQFILDNYIERGKGSACRIVCTQPRRISAISVAERVAAERAESCGNGNSTGYQIRLQSRLPRKQGSILYCTTGIILQWLQSDPHLSSVSHIVLDEIHERNLQSDVLMTVVKDLLSYRPDLKVVLMSATLNAEKFSEYFGNCPMIHIPGFTFPVVEYLLEDIIEKIRYVPEQKEHRSQFKKGFMQGHVNRQEKEEKEAIYKERWPGYLRELRQRYSASTVDVVEMMDDEKVDLNLIAALIRYIVLEEEDGAILVFLPGWDNISTLHDLLMSQVMFKSDKFIIIPLHSLMPTVNQTQVFKRTPPGVRKIVIATNIAETSITIDDVVYVIDGGKIKETHFDTQNNISTMSAEWVSKANAKQRKGRAGRVQPGHCYHLYNSLRASLLDDYQLPEILRTPLEELCLQIKILRLGGIAHFLSRLMDPPSNEAVLLSIKHLMELNALDKQEELTPLGVHLARLPVEPHIGKMILFGALFCCLDPVLTIAASLSFKDPFVIPLGKEKVADARRKELAKDTKSDHLTVVNAFKGWEKAKQRGFRYEKDYCWEYFLSSNTLQMLHNMKGQFAEHLLGAGFVSSRNPQDPESNINSDNEKIIKAVICAGLYPKVAKIRLNLGKKRKMVKVYTKTDGVVAIHPKSVNVEQTEFNYNWLIYHLKMRTSSIYLYDCTEVSPYCLLFFGGDISIQKDNDQETIAVDEWIIFQSPARIAHLVKELRKELDILLQEKIESPHPVDWKDTKSRDCAVLSAIIDLIKTQEKATPRNLPPRFQDGYYS.

Residues 1–54 (MSYDYHQNWGRDGGPRSSGGGYGGSYGGSHGGGHGGNRGSGGGGGGGGGRGGRG) form a required for recruitment to cytoplasmic stress granules region. A disordered region spans residues 1-63 (MSYDYHQNWG…GRHPGHLKGR (63 aa)). A required for the pre-miR-134 transport region spans residues 1-107 (MSYDYHQNWG…IVQLLHSVQT (107 aa)). The necessary for nuclear and nucleolar caps localizations stretch occupies residues 1 to 202 (MSYDYHQNWG…KKTDLRYIEM (202 aa)). A compositionally biased stretch (gly residues) spans 16–51 (RSSGGGYGGSYGGSHGGGHGGNRGSGGGGGGGGGRG). The segment at 56 to 78 (HPGHLKGREIGLWYAKKQGQKNK) is DSM (DHX36-specific motif). A required for G4-DNA- and G4-RNA-binding region spans residues 56–108 (HPGHLKGREIGLWYAKKQGQKNKEAERQERAVVHMDERREEQIVQLLHSVQTK). RecA-like domain stretches follow at residues 109–388 (NDKD…MIHI) and 389–630 (PGFT…DYQL). A Helicase ATP-binding domain is found at 219–389 (VNMIDNHQVT…FGNCPMIHIP (171 aa)). Residue 235 to 240 (GCGKTT) participates in ATP binding. The segment at 267 to 319 (RRISAISVAERVAAERAESCGNGNSTGYQIRLQSRLPRKQGSILYCTTGIILQ) is necessary for interaction with single-stranded DNA at the 3'-end of the G4-DNA structure. Positions 336 to 339 (DEIH) match the DEAH box motif. Residues glutamate 337 and histidine 339 each coordinate Mg(2+). The Helicase C-terminal domain occupies 479-649 (ALIRYIVLEE…ELCLQIKILR (171 aa)). The tract at residues 500–559 (WDNISTLHDLLMSQVMFKSDKFIIIPLHSLMPTVNQTQVFKRTPPGVRKIVIATNIAETS) is necessary for interaction with single-stranded DNA at the 3'-end of the G4-DNA structure. The Nuclear localization signal signature appears at 519-530 (DKFIIIPLHSLM). ATP-binding positions include serine 559 and 604–607 (RAGR). The interval 631 to 700 (PEILRTPLEE…LGVHLARLPV (70 aa)) is WH domain. 3 necessary for interaction with single-stranded DNA at the 3'-end of the G4-DNA structure regions span residues 640 to 699 (ELCL…ARLP), 851 to 862 (NLGKKRKMVKVY), and 872 to 902 (HPKSVNVEQTEFNYNWLIYHLKMRTSSIYLY). The tract at residues 843–907 (PKVAKIRLNL…SIYLYDCTEV (65 aa)) is OB-fold-like subdomains. At lysine 949 the chain carries N6-acetyllysine. At serine 965 the chain carries Phosphoserine.

Found in a multi-helicase-TICAM1 complex at least composed of DHX36, DDX1, DDX21 and TICAM1; this complex exists in resting cells with or without dsRNA poly(I:C) ligand stimulation. Interacts (via C-terminus) with TICAM1 (via TIR domain). Interacts (via C-terminus) with DDX21; this interaction serves as bridges to TICAM1. Interacts with TERT; this interaction is dependent on the ability of DHX36 to bind to the G-quadruplex RNA (G4-RNA) structure present in the telomerase RNA template component (TERC). Interacts with DKC1; this interaction is dependent on the ability of DHX36 to bind to the G4-RNA structure present in TERC. Interacts with PARN; this interaction stimulates PARN to enhance uPA mRNA decay. Interacts with EXOSC3; this interaction occurs in a RNase-insensitive manner. Interacts with EXOSC10; this interaction occurs in a RNase-insensitive manner. Interacts with ILF3; this interaction occurs in a RNA-dependent manner. Interacts with ELAVL1; this interaction occurs in an RNA-dependent manner. Interacts with DDX5; this interaction occurs in a RNA-dependent manner. Interacts with DDX17; this interaction occurs in a RNA-dependent manner. Interacts with HDAC1; this interaction occurs in a RNA-dependent manner. Interacts with HDAC3; this interaction occurs in a RNA-dependent manner. Interacts with HDAC4. Interacts with AGO1. Interacts with AGO2. Interacts with ERCC6. The cofactor is Mg(2+).

It localises to the nucleus. The protein resides in the cytoplasm. Its subcellular location is the cytosol. The protein localises to the stress granule. It is found in the nucleus speckle. It localises to the chromosome. The protein resides in the telomere. Its subcellular location is the mitochondrion. The protein localises to the perikaryon. It is found in the cell projection. It localises to the dendrite. The protein resides in the axon. It catalyses the reaction ATP + H2O = ADP + phosphate + H(+). ATPase activity is enhanced in the presence of homomeric poly(U) RNAs, but not by double-stranded DNA (dsDNA), double-stranded RNA (dsRNA) and tRNA. In terms of biological role, multifunctional ATP-dependent helicase that unwinds G-quadruplex (G4) structures. Plays a role in many biological processes such as genomic integrity, gene expression regulations and as a sensor to initiate antiviral responses. G4 structures correspond to helical structures containing guanine tetrads. Binds with high affinity to and unwinds G4 structures that are formed in nucleic acids (G4-DNA and G4-RNA). Plays a role in genomic integrity. Converts the G4-RNA structure present in telomerase RNA template component (TREC) into a double-stranded RNA to promote P1 helix formation that acts as a template boundary ensuring accurate reverse transcription. Plays a role in transcriptional regulation. Resolves G4-DNA structures in promoters of genes, such as YY1, KIT/c-kit and ALPL and positively regulates their expression. Plays a role in post-transcriptional regulation. Unwinds a G4-RNA structure located in the 3'-UTR polyadenylation site of the pre-mRNA TP53 and stimulates TP53 pre-mRNA 3'-end processing in response to ultraviolet (UV)-induced DNA damage. Binds to the precursor-microRNA-134 (pre-miR-134) terminal loop and regulates its transport into the synapto-dendritic compartment. Involved in the pre-miR-134-dependent inhibition of target gene expression and the control of dendritic spine size. Plays a role in the regulation of cytoplasmic mRNA translation and mRNA stability. Binds to both G4-RNA structures and alternative non-quadruplex-forming sequence within the 3'-UTR of the PITX1 mRNA regulating negatively PITX1 protein expression. Binds to both G4-RNA structure in the 5'-UTR and AU-rich elements (AREs) localized in the 3'-UTR of NKX2-5 mRNA to either stimulate protein translation or induce mRNA decay in an ELAVL1-dependent manner, respectively. Also binds to ARE sequences present in several mRNAs mediating exosome-mediated 3'-5' mRNA degradation. Involved in cytoplasmic urokinase-type plasminogen activator (uPA) mRNA decay. Component of a multi-helicase-TICAM1 complex that acts as a cytoplasmic sensor of viral double-stranded RNA (dsRNA) and plays a role in the activation of a cascade of antiviral responses including the induction of pro-inflammatory cytokines via the adapter molecule TICAM1. Required for the early embryonic development and hematopoiesis. Involved in the regulation of cardioblast differentiation and proliferation during heart development. Involved in spermatogonia differentiation. May play a role in ossification. This is ATP-dependent DNA/RNA helicase DHX36 from Bos taurus (Bovine).